The following is a 310-amino-acid chain: tRNA uridine(34) hydroxylase (310 aa).

The Rhodanese domain occupies 127–225 (KNQNTIVIDT…YLDDIPKEKN (99 aa)). Cys185 serves as the catalytic Cysteine persulfide intermediate.

This sequence belongs to the TrhO family.

It carries out the reaction uridine(34) in tRNA + AH2 + O2 = 5-hydroxyuridine(34) in tRNA + A + H2O. Its function is as follows. Catalyzes oxygen-dependent 5-hydroxyuridine (ho5U) modification at position 34 in tRNAs. This Prochlorococcus marinus (strain MIT 9312) protein is tRNA uridine(34) hydroxylase.